A 350-amino-acid chain; its full sequence is GDSL esterase/lipase At4g10955 (350 aa).

It belongs to the 'GDSL' lipolytic enzyme family.

This chain is GDSL esterase/lipase At4g10955, found in Arabidopsis thaliana (Mouse-ear cress).